The following is a 382-amino-acid chain: Small ribosomal subunit protein mS35 (382 aa).

Positions 363 to 375 (GRGGKALPGGKGG) are enriched in gly residues. A disordered region spans residues 363 to 382 (GRGGKALPGGKGGKMQRSKR).

The protein belongs to the mitochondrion-specific ribosomal protein mS35 family. As to quaternary structure, component of the mitochondrial small ribosomal subunit (mt-SSU). Mature N.crassa 74S mitochondrial ribosomes consist of a small (37S) and a large (54S) subunit. The 37S small subunit contains a 16S ribosomal RNA (16S mt-rRNA) and 32 different proteins. The 54S large subunit contains a 23S rRNA (23S mt-rRNA) and 42 different proteins.

It is found in the mitochondrion. In terms of biological role, component of the mitochondrial ribosome (mitoribosome), a dedicated translation machinery responsible for the synthesis of mitochondrial genome-encoded proteins, including at least some of the essential transmembrane subunits of the mitochondrial respiratory chain. The mitoribosomes are attached to the mitochondrial inner membrane and translation products are cotranslationally integrated into the membrane. The polypeptide is Small ribosomal subunit protein mS35 (rsm24) (Neurospora crassa (strain ATCC 24698 / 74-OR23-1A / CBS 708.71 / DSM 1257 / FGSC 987)).